Consider the following 273-residue polypeptide: Protein N-terminal and lysine N-methyltransferase EFM7 (273 aa).

Residues 1–32 (MSDIEDLASGGLFDEPKDFYKPEEQPGSDSYA) are disordered. A compositionally biased stretch (basic and acidic residues) spans 14 to 24 (DEPKDFYKPEE). S-adenosyl-L-methionine-binding positions include tryptophan 65, 92 to 94 (GAG), aspartate 114, tryptophan 161, and serine 183.

This sequence belongs to the class I-like SAM-binding methyltransferase superfamily. EFM7 family.

It localises to the cytoplasm. Functionally, S-adenosyl-L-methionine-dependent protein methyltransferase that trimethylates the N-terminal glycine 'Gly-2' of elongation factor 1-alpha, before also catalyzing the mono- and dimethylation of 'Lys-3'. In Yarrowia lipolytica (strain CLIB 122 / E 150) (Yeast), this protein is Protein N-terminal and lysine N-methyltransferase EFM7.